Here is a 69-residue protein sequence, read N- to C-terminus: Large ribosomal subunit protein bL28 (69 aa).

Belongs to the bacterial ribosomal protein bL28 family.

The protein is Large ribosomal subunit protein bL28 of Lawsonia intracellularis (strain PHE/MN1-00).